A 347-amino-acid chain; its full sequence is uncharacterized protein (347 aa).

The next 10 membrane-spanning stretches (helical) occupy residues 15–35, 46–66, 84–104, 111–131, 149–169, 182–202, 214–234, 249–269, 283–303, and 312–332; these read FVPSWFAAVMGTGILAVDSLL, VAVGLFYFNVLLFFIFLVPWV, VLSAFYPTIAVSCLVLGADFI, FWGGVFWTLGAIGMFLFSLIV, GWYIPPVGLIVIPIAGSLIMP, INYFGWGAGFFLYLALLAVVI, AMAPTVWINLGPIGAGIVALI, FYIFSFIFWGFGLWWSLMAII, AMSWWAFIFPLGAYVASSHLV, and IDYIGFGLYWLLFFFWAITLI.

This sequence belongs to the tellurite-resistance/dicarboxylate transporter (TDT) family.

It localises to the cell membrane. This is an uncharacterized protein from Methanocaldococcus jannaschii (strain ATCC 43067 / DSM 2661 / JAL-1 / JCM 10045 / NBRC 100440) (Methanococcus jannaschii).